Reading from the N-terminus, the 1264-residue chain is Regulator of G-protein signaling 22 (1264 aa).

The segment at 565–587 is disordered; it reads EEFSLSQPPKSPNKSPEVKTATQ. Residues 568 to 578 show a composition bias toward polar residues; the sequence is SLSQPPKSPNK. RGS domains follow at residues 852 to 980 and 1021 to 1145; these read KFSD…AARQ and AFRK…TDEN. Positions 1142–1174 form a coiled coil; it reads TDENIMSVLERRQEYNKQKKKLAVLEDEKSGKD.

As to quaternary structure, interacts with GNA11, GNA12 and GNA13. Testis-specific. Expressed in Leydig cells and spermatogenic cells from the spermatogonia to spermatid stages (at protein level).

The protein resides in the cytoplasm. It localises to the nucleus. Inhibits signal transduction by increasing the GTPase activity of G protein alpha subunits thereby driving them into their inactive GDP-bound form. This chain is Regulator of G-protein signaling 22 (RGS22), found in Homo sapiens (Human).